The chain runs to 57 residues: Probable antitoxin MazE1 (57 aa).

In terms of assembly, forms a complex with cognate toxin MazF1.

In terms of biological role, antitoxin component of a type II toxin-antitoxin (TA) system. The protein is Probable antitoxin MazE1 (mazE1) of Mycobacterium tuberculosis (strain ATCC 25618 / H37Rv).